The sequence spans 377 residues: Sodium-dependent organic anion transporter (377 aa).

The Extracellular portion of the chain corresponds to 1 to 29 (MRANCSSSSACPANSSEEELPVGLEVHGN). Asn4 is a glycosylation site (N-linked (GlcNAc...) asparagine). The helical transmembrane segment at 30–50 (LELVFTVVSTVMMGLLMFSLG) threads the bilayer. Residues 51 to 67 (CSVEIRKLWSHIRRPWG) are Cytoplasmic-facing. Residues 68 to 88 (IAVGLLCQFGLMPFTAYLLAI) traverse the membrane as a helical segment. Topologically, residues 89–97 (SFSLKPVQA) are extracellular. The chain crosses the membrane as a helical span at residues 98–118 (IAVLIMGCCPGGTISNIFTFW). Over 119-133 (VDGDMDLSISMTTCS) the chain is Cytoplasmic. A helical membrane pass occupies residues 134-154 (TVAALGMMPLCIYLYTWSWSL). Topologically, residues 155–159 (QQNLT) are extracellular. A glycan (N-linked (GlcNAc...) asparagine) is linked at Asn157. A helical membrane pass occupies residues 160 to 180 (IPYQNIGITLVCLTIPVAFGV). Topologically, residues 181-195 (YVNYRWPKQSKIILK) are cytoplasmic. A helical transmembrane segment spans residues 196–216 (IGAVVGGVLLLVVAVAGVVLA). Over 217 to 226 (KGSWNSDITL) the chain is Extracellular. Residues 227-247 (LTISFIFPLIGHVTGFLLALF) form a helical membrane-spanning segment. Residues 248 to 266 (THQSWQRCRTISLETGAQN) are Cytoplasmic-facing. The chain crosses the membrane as a helical span at residues 267-285 (IQMCITMLQLSFTAEHLVQ). The Extracellular portion of the chain corresponds to 286 to 290 (MLSFP). Residues 291-311 (LAYGLFQLIDGFLIVAAYQTY) traverse the membrane as a helical segment. The Cytoplasmic portion of the chain corresponds to 312–377 (KRRLKNKHGK…EPVGHITSCE (66 aa)).

It belongs to the bile acid:sodium symporter (BASS) (TC 2.A.28) family. Glycosylated. As to expression, highly expressed in testis, placenta and pancreas. Moderately expressed in heart, lung and mammary gland. Weakly expressed in brain, colon, kidney, liver, ovary, prostate, small intestine, spleen and thymus.

It localises to the membrane. It carries out the reaction estrone 3-sulfate(out) + 2 Na(+)(out) = estrone 3-sulfate(in) + 2 Na(+)(in). The enzyme catalyses 17beta-estradiol 3-sulfate(out) + 2 Na(+)(out) = 17beta-estradiol 3-sulfate(in) + 2 Na(+)(in). It catalyses the reaction dehydroepiandrosterone 3-sulfate(out) + 2 Na(+)(out) = dehydroepiandrosterone 3-sulfate(in) + 2 Na(+)(in). The catalysed reaction is androst-5-ene-diol 3-sulfate(out) + 2 Na(+)(out) = androst-5-ene-diol 3-sulfate(in) + 2 Na(+)(in). It carries out the reaction pregnenolone sulfate(out) + 2 Na(+)(out) = pregnenolone sulfate(in) + 2 Na(+)(in). The enzyme catalyses taurolithocholate 3-sulfate(out) + 2 Na(+)(out) = taurolithocholate 3-sulfate(in) + 2 Na(+)(in). It catalyses the reaction androsterone 3alpha-sulfate(out) + 2 Na(+)(out) = androsterone 3alpha-sulfate(in) + 2 Na(+)(in). The catalysed reaction is 5alpha-dihydrotestosterone sulfate(out) + 2 Na(+)(out) = 5alpha-dihydrotestosterone sulfate(in) + 2 Na(+)(in). It carries out the reaction 17beta-estradiol 17-sulfate(out) + 2 Na(+)(out) = 17beta-estradiol 17-sulfate(in) + 2 Na(+)(in). The enzyme catalyses 17alpha-hydroxypregnenolone 3-sulfate(out) + 2 Na(+)(out) = 17alpha-hydroxypregnenolone 3-sulfate(in) + 2 Na(+)(in). It catalyses the reaction epiandrosterone 3-sulfate(out) + 2 Na(+)(out) = epiandrosterone 3-sulfate(in) + 2 Na(+)(in). The catalysed reaction is epitestosterone 17-sulfate(out) + 2 Na(+)(out) = epitestosterone 17-sulfate(in) + 2 Na(+)(in). It carries out the reaction testosterone 17-sulfate(out) + 2 Na(+)(out) = testosterone 17-sulfate(in) + 2 Na(+)(in). The enzyme catalyses 16alpha-hydroxydehydroepiandrosterone 3-sulfate(out) + 2 Na(+)(out) = 16alpha-hydroxydehydroepiandrosterone 3-sulfate(in) + 2 Na(+)(in). Functionally, transports sulfoconjugated steroid hormones from the extracellular compartment into the cytosol in a sodium-dependent manner without hydrolysis. Steroid sulfate hormones are commonly considered to be biologically inactive metabolites, that may be activated by steroid sulfatases into free steroids. May play an important role by delivering sulfoconjugated steroids to specific target cells in reproductive organs. May play a role transporting the estriol precursor 16alpha-hydroxydehydroepiandrosterone 3-sulfate (16a-OH-DHEAS) at the fetal blood vessel endothelium. Can also transport other sulfoconjugated molecules such as taurolithocholic acid-3-sulfate and sulfoconjugated pyrenes. This is Sodium-dependent organic anion transporter (SLC10A6) from Homo sapiens (Human).